Here is a 271-residue protein sequence, read N- to C-terminus: Extent of cell elongation protein 1 (271 aa).

A signal peptide spans 1–18 (MKFSKIACATVFALSSQA). A helical membrane pass occupies residues 62 to 82 (SIIGIIMGILGNIPQVIQIIM).

In terms of assembly, polymerizes in solution to form membrane pores. Cleavage by KEX2 generates 8 peptides ECE1-I to ECE1-VIII, all terminating in Lys-Arg. Only peptide ECE1-III, called candidalysin, shows toxin activity.

The protein localises to the secreted. The protein resides in the host cell membrane. Secreted protein cleaved by KEX2 in 8 similar peptides (ECE1-I to ECE1-VIII). Stimulates biofilm formation. Its function is as follows. Acts as a cytolytic peptide toxin that directly damages host epithelial membranes, triggers a danger response signaling pathway and activates epithelial immunity. Polymerizes in solution to form membrane pores to damage epithelial cells. Induces calcium influx, oxidative stress, mitochondrial dysfunction and ATP depletion in host cells, leading to epithelial necrosis. Serves as a danger signal that potentiates the immune response, and more specifically IL-17 response. Induces cytokine/chemokine secretion by host (especially CCL2/3/4, CXCL1 and S100A8), neutrophil recruitment, and promotes mortality in zebrafish and murine models of systemic fungal infection. Mediates distinct epithelial inflammatory responses through p38, EGFR-ERK and TREM-1/DAP12 pathways. Acts as one of the hypha-derived drivers of NLRP3 inflammasome responses in primary macrophages and thus contributes to the capacity to induce maturation and secretion of IL-1beta from primary macrophages. Stimulates mast cells by mediating cross-talk between signaling pathways activated by the dectin-1 receptor and MAPKs. Enables escape via the gasdermin-mediated pyroptosis, as well as a cell lysis pathway associated with macrophage extracellular trap formation termed ETosis. Acts as the main hemolytic factor of C.albicans. As an exotoxine, also promotes alcohol-associated liver disease or oral carcinogenesis. In Candida albicans (strain SC5314 / ATCC MYA-2876) (Yeast), this protein is Extent of cell elongation protein 1.